Here is an 85-residue protein sequence, read N- to C-terminus: Translation initiation factor IF-1 (85 aa).

One can recognise an S1-like domain in the interval 1 to 72 (MAKEELLEMR…TKARITYRFM (72 aa)).

It belongs to the IF-1 family. Component of the 30S ribosomal translation pre-initiation complex which assembles on the 30S ribosome in the order IF-2 and IF-3, IF-1 and N-formylmethionyl-tRNA(fMet); mRNA recruitment can occur at any time during PIC assembly.

It localises to the cytoplasm. In terms of biological role, one of the essential components for the initiation of protein synthesis. Stabilizes the binding of IF-2 and IF-3 on the 30S subunit to which N-formylmethionyl-tRNA(fMet) subsequently binds. Helps modulate mRNA selection, yielding the 30S pre-initiation complex (PIC). Upon addition of the 50S ribosomal subunit IF-1, IF-2 and IF-3 are released leaving the mature 70S translation initiation complex. This is Translation initiation factor IF-1 from Erythrobacter litoralis (strain HTCC2594).